The sequence spans 403 residues: Protein-export membrane protein SecD (403 aa).

A run of 6 helical transmembrane segments spans residues 13 to 33, 245 to 265, 285 to 305, 306 to 326, 347 to 367, and 368 to 388; these read LLVITAVWIVAATSLAVKGVN, FLKMAMIAGAIAFAAVSVIIA, VVFLIGLASLTGFTIDLPALA, GIILSIGSGVDDLIVITDEIV, VVLASFATLAAAMAVLFVAGM, and GLLKGFAIMTIAGAFYGVVIT.

It belongs to the SecD/SecF family. SecD subfamily. As to quaternary structure, part of the protein translocation apparatus. Forms a complex with SecF.

It localises to the cell membrane. Its function is as follows. Involved in protein export. This is Protein-export membrane protein SecD from Methanopyrus kandleri (strain AV19 / DSM 6324 / JCM 9639 / NBRC 100938).